The sequence spans 70 residues: Large ribosomal subunit protein eL38 (70 aa).

It belongs to the eukaryotic ribosomal protein eL38 family.

The polypeptide is Large ribosomal subunit protein eL38 (RpL38) (Drosophila melanogaster (Fruit fly)).